We begin with the raw amino-acid sequence, 339 residues long: Probable cytosolic iron-sulfur protein assembly protein CIAO1 (339 aa).

WD repeat units follow at residues 14–53 (HPDSRCWFLAWNPSGTLLASCGGDRKIRIWGTEGDSWICK), 59–98 (GHQRTVRKVAWSPCGNYLASASFDATTCIWKKNQDDFECV), 103–142 (GHENEVKSVAWAPSGNLLATCSRDKSVWVWEVDEEDEYEC), 148–187 (SHTQDVKHVVWHPSQELLASASYDDTVKLYQEEGDDWVCC), 192–231 (GHESTVWSIAFDPSGQRLASCSDDRTVRIWRQYLPGNEQG), 250–289 (FHTRTIYDVAWCQLTGALATACGDDAIRVFEEDPGSDPQQ), and 301–339 (AHSQDVNCVAWNPKEPGLLASCSDDGEVAFWEYHQPAGL). An LYR motif; required for interaction with HSC20 motif is present at residues 176 to 178 (LYQ).

Belongs to the WD repeat CIA1 family. In terms of assembly, component of the CIA complex. Interacts with CIAO2A and forms a complex with CIAO2B and MMS19; the interactions with CIAO2A and CIAO2B are mutually exclusive. Interacts with CHD1L, ERCC2, IREB2 and POLD1. Component of the MMXD complex, which includes CIAO1, ERCC2, CIAO2B, MMS19 and SLC25A5. Interacts with WT1. Interacts with CIAO3. Interacts (via LYR motif) with HSC20.

It is found in the cytoplasm. In terms of biological role, key component of the cytosolic iron-sulfur protein assembly (CIA) complex, a multiprotein complex that mediates the incorporation of iron-sulfur cluster into extramitochondrial Fe/S proteins. As a CIA complex component, interacts specifically with CIAO2A or CIAO2B and MMS19 to assist different branches of iron-sulfur protein assembly, depending of its interactors. The complex CIAO1:CIAO2B:MMS19 binds to and facilitates the assembly of most cytosolic-nuclear Fe/S proteins. CIAO1:CIAO2A specifically matures ACO1 and stabilizes IREB2. Seems to specifically modulate the transactivation activity of WT1. As part of the mitotic spindle-associated MMXD complex it may play a role in chromosome segregation. In Mus musculus (Mouse), this protein is Probable cytosolic iron-sulfur protein assembly protein CIAO1.